The following is a 304-amino-acid chain: Nicotinamide/nicotinic acid mononucleotide adenylyltransferase 2 (304 aa).

2 residues coordinate NAD(+): Ser-16 and Phe-17. His-24 serves as a coordination point for ATP. Positions 92 and 95 each coordinate NAD(+). 2 S-palmitoyl cysteine lipidation sites follow: Cys-161 and Cys-162. Residues Gly-197, Asp-199, Leu-209, Trp-210, and Arg-229 each coordinate NAD(+). Residue 268–271 (TKSR) participates in ATP binding.

It belongs to the eukaryotic NMN adenylyltransferase family. In terms of assembly, monomer. Mg(2+) is required as a cofactor.

The protein localises to the golgi apparatus membrane. It is found in the cytoplasmic vesicle membrane. The protein resides in the cytoplasm. Its subcellular location is the cell projection. It localises to the axon. It carries out the reaction beta-nicotinamide D-ribonucleotide + ATP + H(+) = diphosphate + NAD(+). The enzyme catalyses nicotinate beta-D-ribonucleotide + ATP + H(+) = deamido-NAD(+) + diphosphate. It functions in the pathway cofactor biosynthesis; NAD(+) biosynthesis; NAD(+) from nicotinamide D-ribonucleotide: step 1/1. Its pathway is cofactor biosynthesis; NAD(+) biosynthesis; deamido-NAD(+) from nicotinate D-ribonucleotide: step 1/1. In terms of biological role, nicotinamide/nicotinate-nucleotide adenylyltransferase that acts as an axon maintenance factor. Axon survival factor required for the maintenance of healthy axons: acts by delaying Wallerian axon degeneration, an evolutionarily conserved process that drives the loss of damaged axons. Catalyzes the formation of NAD(+) from nicotinamide mononucleotide (NMN) and ATP. Can also use the deamidated form; nicotinic acid mononucleotide (NaMN) as substrate but with a lower efficiency. Also catalyzes the reverse reaction, i.e. the pyrophosphorolytic cleavage of NAD(+). For the pyrophosphorolytic activity prefers NAD(+), NADH and NaAD as substrates and degrades nicotinic acid adenine dinucleotide phosphate (NHD) less effectively. Also acts as an activator of ADP-ribosylation by supporting the catalytic activity of PARP16 and promoting mono-ADP-ribosylation of ribosomes by PARP16. May be involved in the maintenance of axonal integrity. This is Nicotinamide/nicotinic acid mononucleotide adenylyltransferase 2 (nmnat2) from Danio rerio (Zebrafish).